Reading from the N-terminus, the 702-residue chain is Cell adhesion molecule CEACAM5 (702 aa).

The first 34 residues, 1–34 (MESPSAPPHRWCIPWQRLLLTASLLTFWNPPTTA), serve as a signal peptide directing secretion. The Ig-like V-type domain occupies 35–144 (KLTIESTPFN…TGQFRVYPEL (110 aa)). Asn-104, Asn-115, Asn-152, Asn-182, Asn-197, Asn-204, Asn-208, Asn-246, Asn-256, Asn-274, Asn-288, Asn-292, Asn-309, Asn-330, Asn-351, Asn-360, Asn-375, Asn-432, Asn-466, Asn-480, Asn-508, Asn-529, Asn-553, Asn-560, Asn-580, Asn-612, Asn-650, and Asn-665 each carry an N-linked (GlcNAc...) asparagine glycan. Ig-like C2-type domains lie at 145 to 232 (PKPS…VILN), 240 to 315 (PTIS…TVTT), 323 to 410 (PKPF…VILN), 418 to 495 (PTIS…KTIT), 501 to 588 (PKPS…VTLD), and 593 to 675 (PDTP…ITVS). A disulfide bridge connects residues Cys-167 and Cys-215. Cys-259 and Cys-299 form a disulfide bridge. Cys-345 and Cys-393 form a disulfide bridge. A disulfide bond links Cys-437 and Cys-477. A disulfide bond links Cys-523 and Cys-571. An intrachain disulfide couples Cys-615 to Cys-655. Ala-685 carries GPI-anchor amidated alanine lipidation. Residues 686 to 702 (GATVGIMIGVLVGVALI) constitute a propeptide, removed in mature form.

Belongs to the immunoglobulin superfamily. CEA family. In terms of assembly, homodimer. In terms of processing, complex immunoreactive glycoprotein with a MW of 180 kDa comprising 60% carbohydrate. As to expression, expressed in columnar epithelial and goblet cells of the colon (at protein level). Found in adenocarcinomas of endodermally derived digestive system epithelium and fetal colon.

The protein localises to the cell membrane. The protein resides in the apical cell membrane. It localises to the cell surface. Functionally, cell surface glycoprotein that plays a role in cell adhesion, intracellular signaling and tumor progression. Mediates homophilic and heterophilic cell adhesion with other carcinoembryonic antigen-related cell adhesion molecules, such as CEACAM6. Plays a role as an oncogene by promoting tumor progression; induces resistance to anoikis of colorectal carcinoma cells. (Microbial infection) Receptor for E.coli Dr adhesins. Binding of E.coli Dr adhesins leads to dissociation of the homodimer. The chain is Cell adhesion molecule CEACAM5 from Homo sapiens (Human).